A 373-amino-acid chain; its full sequence is Peptide chain release factor subunit 1 (373 aa).

It belongs to the eukaryotic release factor 1 family. In terms of assembly, heterodimer of two subunits, one of which binds GTP.

The protein resides in the cytoplasm. Its function is as follows. Directs the termination of nascent peptide synthesis (translation) in response to the termination codons UAA, UAG and UGA. The chain is Peptide chain release factor subunit 1 (prf1) from Aeropyrum pernix (strain ATCC 700893 / DSM 11879 / JCM 9820 / NBRC 100138 / K1).